A 257-amino-acid chain; its full sequence is Imidazole glycerol phosphate synthase subunit HisF (257 aa).

Residues Asp12 and Asp131 contribute to the active site.

It belongs to the HisA/HisF family. As to quaternary structure, heterodimer of HisH and HisF.

It is found in the cytoplasm. It catalyses the reaction 5-[(5-phospho-1-deoxy-D-ribulos-1-ylimino)methylamino]-1-(5-phospho-beta-D-ribosyl)imidazole-4-carboxamide + L-glutamine = D-erythro-1-(imidazol-4-yl)glycerol 3-phosphate + 5-amino-1-(5-phospho-beta-D-ribosyl)imidazole-4-carboxamide + L-glutamate + H(+). It functions in the pathway amino-acid biosynthesis; L-histidine biosynthesis; L-histidine from 5-phospho-alpha-D-ribose 1-diphosphate: step 5/9. IGPS catalyzes the conversion of PRFAR and glutamine to IGP, AICAR and glutamate. The HisF subunit catalyzes the cyclization activity that produces IGP and AICAR from PRFAR using the ammonia provided by the HisH subunit. The protein is Imidazole glycerol phosphate synthase subunit HisF of Rhodococcus erythropolis (strain PR4 / NBRC 100887).